Here is a 985-residue protein sequence, read N- to C-terminus: Na(+)/H(+) antiporter (985 aa).

At 1 to 12 the chain is on the cytoplasmic side; it reads MAIWEQLEVSKA. A helical membrane pass occupies residues 13–33; that stretch reads HVAYACVGVFSSIFSLVSLYV. The Extracellular portion of the chain corresponds to 34 to 36; sequence KEK. Residues 37 to 57 form a helical membrane-spanning segment; the sequence is LYIGESTVAGIFGLIVGPVCL. Residues 58-70 lie on the Cytoplasmic side of the membrane; the sequence is NWFNPLKWGNSDS. The chain crosses the membrane as a helical span at residues 71–91; sequence ITLEITRIVLCLQIFAVAVEL. Residues 92–105 lie on the Extracellular side of the membrane; that stretch reads PRKYMLKHWVSVTM. A helical membrane pass occupies residues 106-126; the sequence is LLLPVMTAGWLIIGLFVWILI. Over 127–128 the chain is Cytoplasmic; sequence PG. The helical transmembrane segment at 129–149 threads the bilayer; the sequence is LNFSASLLISACITATDPILA. Over 150–176 the chain is Extracellular; that stretch reads QSVVSGKFAQRVPGHLRNLLSAESGCN. Residues 177–197 form a helical membrane-spanning segment; it reads DGMAFPFLFLSMNLILHPGNG. At 198–203 the chain is on the cytoplasmic side; that stretch reads REIVKD. Residues 204-224 traverse the membrane as a helical segment; the sequence is WICVTILYECLFGCLLGCFIG. Topologically, residues 225-244 are extracellular; sequence YVGRITIRFAEKKNIIDRES. The chain crosses the membrane as a helical span at residues 245 to 265; sequence FLAFYVVLAFMCAGFGSILGV. The Cytoplasmic segment spans residues 266–294; it reads DDLLVSFAAGATFAWDGWFSQKTQESNVS. The chain crosses the membrane as a helical span at residues 295 to 315; sequence TVIDLLLNYAYFIYFGAIIPW. Residues 316-319 are Extracellular-facing; that stretch reads SQFN. The helical transmembrane segment at 320–340 threads the bilayer; that stretch reads NGEIGTNVWRLIILSIVVIFL. Residues 341–361 lie on the Cytoplasmic side of the membrane; sequence RRIPAVMILRPLIPDIKSWRE. A helical membrane pass occupies residues 362–382; sequence ALFVGHFGPIGVGAIFAAILA. Residues 383 to 410 lie on the Extracellular side of the membrane; the sequence is RGELESTFSDEPTPLNVVPSKEESKHWQ. Residues 411–431 traverse the membrane as a helical segment; that stretch reads LIACIWPITCFFIVTSIIVHG. Residues 432–985 lie on the Cytoplasmic side of the membrane; that stretch reads SSVAIITLGR…ALSKTLGLNK (554 aa). Disordered regions lie at residues 489–701 and 726–760; these read MTLS…KPGT and DRNE…GGRL. Positions 517-526 are enriched in polar residues; that stretch reads NNDQIGSVAT. The segment covering 538 to 558 has biased composition (basic residues); that stretch reads PRRRKLSRKEKRLNRRQKLRN. Basic and acidic residues-rich tracts occupy residues 559–572 and 580–593; these read KGRE…KNEM and DLGR…KEAR. Phosphoserine is present on S568. A compositionally biased stretch (low complexity) spans 637-646; the sequence is SFESSERSSS. The segment covering 661–675 has biased composition (acidic residues); it reads EETESEIESEDEMEN. The span at 676-698 shows a compositional bias: basic and acidic residues; sequence ESERSMASSEERRIRKMKEEEMK. The segment covering 743 to 756 has biased composition (low complexity); sequence SSLTTTMTNLSSSS. T765 bears the Phosphothreonine mark. A phosphoserine mark is found at S768 and S774. Residues 812–985 form a disordered region; it reads INPHKSDDDK…ALSKTLGLNK (174 aa). 2 stretches are compositionally biased toward basic and acidic residues: residues 815–828 and 854–863; these read HKSD…RPRN and DEEKAIEGPS. Residues 887–920 show a composition bias toward acidic residues; that stretch reads LDLEDEPSSEEDLGDSYNMDDSEDYDDNAYESET. The segment covering 970-979 has biased composition (low complexity); it reads SAAVKSALSK.

This sequence belongs to the fungal Na(+)/H(+) exchanger family.

It is found in the cell membrane. Functionally, sodium export from cell, takes up external protons in exchange for internal sodium ions. Also capable of exporting potassium ions. This chain is Na(+)/H(+) antiporter (NHA1), found in Saccharomyces cerevisiae (strain ATCC 204508 / S288c) (Baker's yeast).